Consider the following 377-residue polypeptide: Cyclin-I (377 aa).

Positions 356-377 (TDLSRQEGHASPCPPLQPVSVM) are disordered. Residues 367–377 (PCPPLQPVSVM) show a composition bias toward pro residues.

Belongs to the cyclin family.

This Mus musculus (Mouse) protein is Cyclin-I (Ccni).